The sequence spans 247 residues: Ribonuclease PH (247 aa).

Residues arginine 87 and 125-127 (GTR) contribute to the phosphate site.

It belongs to the RNase PH family. As to quaternary structure, homohexameric ring arranged as a trimer of dimers.

It carries out the reaction tRNA(n+1) + phosphate = tRNA(n) + a ribonucleoside 5'-diphosphate. Functionally, phosphorolytic 3'-5' exoribonuclease that plays an important role in tRNA 3'-end maturation. Removes nucleotide residues following the 3'-CCA terminus of tRNAs; can also add nucleotides to the ends of RNA molecules by using nucleoside diphosphates as substrates, but this may not be physiologically important. Probably plays a role in initiation of 16S rRNA degradation (leading to ribosome degradation) during starvation. The polypeptide is Ribonuclease PH (Trichormus variabilis (strain ATCC 29413 / PCC 7937) (Anabaena variabilis)).